Reading from the N-terminus, the 1181-residue chain is Katanin p80 WD40 repeat-containing subunit B1 homolog KTN80.2 (1181 aa).

7 WD repeats span residues 13 to 53, 56 to 95, 98 to 137, 140 to 181, 183 to 221, 224 to 264, and 266 to 303; these read AHSA…SLMS, GHTS…MVRA, GHRS…CIQT, GHSR…HEFK, HEGP…LIGS, PEAT…DGVD, and GWST…IEPY. A DWD box motif is present at residues 114-130; sequence FLASGSSDANLKIWDIR. Disordered stretches follow at residues 361-383, 503-597, 702-739, 754-869, and 988-1008; these read AHKS…NKSL, KPPR…ESKS, TSMA…QTRT, KMKS…VIST, and TKTQ…ISGR. 2 stretches are compositionally biased toward polar residues: residues 365-379 and 509-526; these read GSLS…QAGD and RSPS…STDS. Composition is skewed to basic and acidic residues over residues 530-553 and 569-585; these read DSKK…DDRG and RSER…ELKS. Polar residues-rich tracts occupy residues 703–739, 754–791, 822–841, and 850–859; these read SMAT…QTRT, KMKS…TRTS, SATN…QAKT, and ILNQRQTTNM. Over residues 998–1008 the composition is skewed to basic and acidic residues; the sequence is TQKEEPQISGR.

This sequence belongs to the WD repeat KATNB1 family. In terms of assembly, component of KTN80-KTN1 complexes composed of a hexamer of KTN1-KTN80 heterodimers that sense microtubule (MT) geometry to confer precise MT severing. Interacts directly with AAA1/KTN1. Interacts with subunits of the CUL4-based E3 ligase complex DDB1A and DDB1B. In terms of tissue distribution, expressed at low levels in siliques, flowers, leaves, stems and roots.

The protein resides in the cytoplasm. Its subcellular location is the cytoskeleton. In terms of biological role, may participate in a complex which severs microtubules in an ATP-dependent manner. Microtubule severing may promote rapid reorganization of cellular microtubule arrays. Confers precision to microtubule (MT) severing by specific targeting of KTN1 to MT cleavage sites such as crossover or branching nucleation sites. Together with other KTN80s, regulates cell elongation by modulating MT organization. Negative regulator of abscisic acid (ABA) responses. May function as a substrate receptor for cullin-RING ubiquitin ligase 4 complexes (CRL4), a family of E3 ligases involved in protein degradation. The chain is Katanin p80 WD40 repeat-containing subunit B1 homolog KTN80.2 from Arabidopsis thaliana (Mouse-ear cress).